The chain runs to 290 residues: Plasma membrane ascorbate-dependent reductase CYBRD1 (290 aa).

Topologically, residues 1–7 (MAMEGYR) are cytoplasmic. A helical membrane pass occupies residues 8–32 (GFLGLLVSALLVGFLSVIFVLIWVL). One can recognise a Cytochrome b561 domain in the interval 15–220 (SALLVGFLSV…FGALIFWIVT (206 aa)). Over 33-47 (HFREGLGWNGSGLEF) the chain is Extracellular. Residues 48–69 (NWHPVLAVTGFVFIQGIAIIVY) form a helical membrane-spanning segment. The heme b site is built by histidine 50, arginine 70, and lysine 79. Residues 70-78 (RLPWTWKCS) are Cytoplasmic-facing. Residues lysine 79 and lysine 83 each coordinate L-ascorbate. Residues 79–105 (KLLMKSIHAGLNAVAAILAIISVVAVF) traverse the membrane as a helical segment. Histidine 86 lines the heme b pocket. Topologically, residues 106–118 (EYHNVQKVPHMYS) are extracellular. A Fe(3+)-binding site is contributed by histidine 108. Heme b is bound by residues 115–118 (HMYS) and histidine 120. Residues 119-144 (LHSWVGLTALILYIQQLVVGFFVFLL) traverse the membrane as a helical segment. The Cytoplasmic segment spans residues 145–151 (PWAPPSL). Position 152 (arginine 152) interacts with L-ascorbate. The chain crosses the membrane as a helical span at residues 152-179 (RAIVMPIHVYSGLLLFGTVIATVLMGVT). Heme b-binding residues include histidine 159 and glutamate 180. Topologically, residues 180 to 197 (EKLFFVLKHPSYHSFPPE) are extracellular. The helical transmembrane segment at 198 to 222 (GVFTNTLGLLILVFGALIFWIVTRP) threads the bilayer. At 223 to 290 (QWKRPREPGS…LADSGQRSTM (68 aa)) the chain is on the cytoplasmic side. Lysine 225 contacts heme b. Serine 232 carries the post-translational modification Phosphoserine. The tract at residues 257–290 (SMDAADPADAESSSEGAARKRTLGLADSGQRSTM) is disordered. Over residues 260–272 (AADPADAESSSEG) the composition is skewed to low complexity. Residue threonine 289 is modified to Phosphothreonine.

As to quaternary structure, homodimer. Requires heme b as cofactor. In terms of tissue distribution, highly expressed in the brush-border membrane of duodenal enterocytes (at protein level). Also expressed in liver and spleen.

It localises to the cell membrane. It is found in the apical cell membrane. The enzyme catalyses Fe(3+)(out) + L-ascorbate(in) = monodehydro-L-ascorbate radical(in) + Fe(2+)(out) + H(+). The catalysed reaction is Cu(2+)(out) + L-ascorbate(in) = Cu(+)(out) + monodehydro-L-ascorbate radical(in) + H(+). It catalyses the reaction monodehydro-L-ascorbate radical(out) + L-ascorbate(in) = monodehydro-L-ascorbate radical(in) + L-ascorbate(out). Its function is as follows. Plasma membrane reductase that uses cytoplasmic ascorbate as an electron donor to reduce extracellular Fe(3+) into Fe(2+). Probably functions in dietary iron absorption at the brush border of duodenal enterocytes by producing Fe(2+), the divalent form of iron that can be transported into enterocytes. It is also able to reduce extracellular monodehydro-L-ascorbate and may be involved in extracellular ascorbate regeneration by erythrocytes in blood. May also act as a ferrireductase in airway epithelial cells. May also function as a cupric transmembrane reductase. The sequence is that of Plasma membrane ascorbate-dependent reductase CYBRD1 from Mus musculus (Mouse).